The following is a 326-amino-acid chain: GTP 3',8-cyclase (326 aa).

The Radical SAM core domain occupies 7-232; the sequence is GFGRSFPYLR…PRAADAGPAR (226 aa). R16 contacts GTP. Residues C23 and C27 each coordinate [4Fe-4S] cluster. Residue Y29 coordinates S-adenosyl-L-methionine. [4Fe-4S] cluster is bound at residue C30. R65 contacts GTP. G69 lines the S-adenosyl-L-methionine pocket. T96 contributes to the GTP binding site. S120 provides a ligand contact to S-adenosyl-L-methionine. K157 provides a ligand contact to GTP. M191 contributes to the S-adenosyl-L-methionine binding site. [4Fe-4S] cluster contacts are provided by C254 and C257. Position 259 to 261 (259 to 261) interacts with GTP; that stretch reads RLR. C271 serves as a coordination point for [4Fe-4S] cluster.

It belongs to the radical SAM superfamily. MoaA family. Monomer and homodimer. The cofactor is [4Fe-4S] cluster.

It catalyses the reaction GTP + AH2 + S-adenosyl-L-methionine = (8S)-3',8-cyclo-7,8-dihydroguanosine 5'-triphosphate + 5'-deoxyadenosine + L-methionine + A + H(+). The protein operates within cofactor biosynthesis; molybdopterin biosynthesis. Functionally, catalyzes the cyclization of GTP to (8S)-3',8-cyclo-7,8-dihydroguanosine 5'-triphosphate. This is GTP 3',8-cyclase from Stenotrophomonas maltophilia (strain R551-3).